Here is a 137-residue protein sequence, read N- to C-terminus: NADH-quinone oxidoreductase subunit A (137 aa).

A run of 3 helical transmembrane segments spans residues 12–32 (WGFA…LGLS), 66–86 (FYLV…LFAW), and 95–115 (WTGF…LVYL).

It belongs to the complex I subunit 3 family. As to quaternary structure, NDH-1 is composed of 13 different subunits. Subunits NuoA, H, J, K, L, M, N constitute the membrane sector of the complex.

It is found in the cell inner membrane. The catalysed reaction is a quinone + NADH + 5 H(+)(in) = a quinol + NAD(+) + 4 H(+)(out). In terms of biological role, NDH-1 shuttles electrons from NADH, via FMN and iron-sulfur (Fe-S) centers, to quinones in the respiratory chain. The immediate electron acceptor for the enzyme in this species is believed to be ubiquinone. Couples the redox reaction to proton translocation (for every two electrons transferred, four hydrogen ions are translocated across the cytoplasmic membrane), and thus conserves the redox energy in a proton gradient. The sequence is that of NADH-quinone oxidoreductase subunit A from Pseudomonas putida (strain ATCC 700007 / DSM 6899 / JCM 31910 / BCRC 17059 / LMG 24140 / F1).